A 77-amino-acid polypeptide reads, in one-letter code: Exodeoxyribonuclease 7 small subunit (77 aa).

The protein belongs to the XseB family. As to quaternary structure, heterooligomer composed of large and small subunits.

The protein localises to the cytoplasm. It catalyses the reaction Exonucleolytic cleavage in either 5'- to 3'- or 3'- to 5'-direction to yield nucleoside 5'-phosphates.. Functionally, bidirectionally degrades single-stranded DNA into large acid-insoluble oligonucleotides, which are then degraded further into small acid-soluble oligonucleotides. This Trichlorobacter lovleyi (strain ATCC BAA-1151 / DSM 17278 / SZ) (Geobacter lovleyi) protein is Exodeoxyribonuclease 7 small subunit.